A 333-amino-acid chain; its full sequence is Holliday junction branch migration complex subunit RuvB (333 aa).

Residues 1-182 (MEERLVSGEV…FGVISRLEYY (182 aa)) form a large ATPase domain (RuvB-L) region. Residues L21, R22, G63, K66, T67, T68, 129-131 (EDY), R172, Y182, and R219 contribute to the ATP site. T67 is a Mg(2+) binding site. Residues 183–253 (HVDQLAQIIE…LAVEALERLQ (71 aa)) form a small ATPAse domain (RuvB-S) region. The interval 256-333 (RLGLDQIDHK…THLGMEVPKR (78 aa)) is head domain (RuvB-H). DNA contacts are provided by R311 and R316.

This sequence belongs to the RuvB family. In terms of assembly, homohexamer. Forms an RuvA(8)-RuvB(12)-Holliday junction (HJ) complex. HJ DNA is sandwiched between 2 RuvA tetramers; dsDNA enters through RuvA and exits via RuvB. An RuvB hexamer assembles on each DNA strand where it exits the tetramer. Each RuvB hexamer is contacted by two RuvA subunits (via domain III) on 2 adjacent RuvB subunits; this complex drives branch migration. In the full resolvosome a probable DNA-RuvA(4)-RuvB(12)-RuvC(2) complex forms which resolves the HJ.

It localises to the cytoplasm. It carries out the reaction ATP + H2O = ADP + phosphate + H(+). Its function is as follows. The RuvA-RuvB-RuvC complex processes Holliday junction (HJ) DNA during genetic recombination and DNA repair, while the RuvA-RuvB complex plays an important role in the rescue of blocked DNA replication forks via replication fork reversal (RFR). RuvA specifically binds to HJ cruciform DNA, conferring on it an open structure. The RuvB hexamer acts as an ATP-dependent pump, pulling dsDNA into and through the RuvAB complex. RuvB forms 2 homohexamers on either side of HJ DNA bound by 1 or 2 RuvA tetramers; 4 subunits per hexamer contact DNA at a time. Coordinated motions by a converter formed by DNA-disengaged RuvB subunits stimulates ATP hydrolysis and nucleotide exchange. Immobilization of the converter enables RuvB to convert the ATP-contained energy into a lever motion, pulling 2 nucleotides of DNA out of the RuvA tetramer per ATP hydrolyzed, thus driving DNA branch migration. The RuvB motors rotate together with the DNA substrate, which together with the progressing nucleotide cycle form the mechanistic basis for DNA recombination by continuous HJ branch migration. Branch migration allows RuvC to scan DNA until it finds its consensus sequence, where it cleaves and resolves cruciform DNA. This is Holliday junction branch migration complex subunit RuvB from Geobacillus kaustophilus (strain HTA426).